The following is a 395-amino-acid chain: Elongation factor Tu (395 aa).

In terms of domain architecture, tr-type G spans 10 to 204; the sequence is KPHVNVGTIG…AVDAYIDTPL (195 aa). The segment at 19 to 26 is G1; sequence GHVDHGKT. 19–26 contacts GTP; the sequence is GHVDHGKT. Thr26 lines the Mg(2+) pocket. Positions 60–64 are G2; it reads GITIN. The G3 stretch occupies residues 81–84; it reads DCPG. GTP-binding positions include 81 to 85 and 136 to 139; these read DCPGH and NKAD. The interval 136 to 139 is G4; it reads NKAD. The tract at residues 174-176 is G5; that stretch reads SAL.

Belongs to the TRAFAC class translation factor GTPase superfamily. Classic translation factor GTPase family. EF-Tu/EF-1A subfamily. As to quaternary structure, monomer.

The protein localises to the cytoplasm. The catalysed reaction is GTP + H2O = GDP + phosphate + H(+). Functionally, GTP hydrolase that promotes the GTP-dependent binding of aminoacyl-tRNA to the A-site of ribosomes during protein biosynthesis. In Acholeplasma laidlawii (strain PG-8A), this protein is Elongation factor Tu.